Here is a 410-residue protein sequence, read N- to C-terminus: Acetate kinase (410 aa).

Position 7 (Asn7) interacts with Mg(2+). Residue Lys14 coordinates ATP. Arg98 serves as a coordination point for substrate. The active-site Proton donor/acceptor is Asp155. ATP-binding positions include His215–Gly219, Asp290–Arg292, and Gly338–Asn342. Glu392 lines the Mg(2+) pocket.

Belongs to the acetokinase family. Homodimer. Requires Mg(2+) as cofactor. The cofactor is Mn(2+).

The protein resides in the cytoplasm. It carries out the reaction acetate + ATP = acetyl phosphate + ADP. Its pathway is metabolic intermediate biosynthesis; acetyl-CoA biosynthesis; acetyl-CoA from acetate: step 1/2. Its function is as follows. Catalyzes the formation of acetyl phosphate from acetate and ATP. Can also catalyze the reverse reaction. The protein is Acetate kinase of Kocuria rhizophila (strain ATCC 9341 / DSM 348 / NBRC 103217 / DC2201).